Consider the following 122-residue polypeptide: Acidic phospholipase A2 2 (122 aa).

Intrachain disulfides connect cysteine 26–cysteine 115, cysteine 28–cysteine 44, cysteine 43–cysteine 95, cysteine 49–cysteine 122, cysteine 50–cysteine 88, cysteine 57–cysteine 81, and cysteine 75–cysteine 86. Positions 27, 29, and 31 each coordinate Ca(2+). Histidine 47 is a catalytic residue. A Ca(2+)-binding site is contributed by aspartate 48. Aspartate 89 is an active-site residue.

The protein belongs to the phospholipase A2 family. Group II subfamily. D49 sub-subfamily. The cofactor is Ca(2+). As to expression, expressed by the venom gland.

Its subcellular location is the secreted. The enzyme catalyses a 1,2-diacyl-sn-glycero-3-phosphocholine + H2O = a 1-acyl-sn-glycero-3-phosphocholine + a fatty acid + H(+). Functionally, snake venom phospholipase A2 (PLA2) that has high lipolytic activity. PLA2 catalyzes the calcium-dependent hydrolysis of the 2-acyl groups in 3-sn-phosphoglycerides. This Craspedocephalus gramineus (Bamboo pit viper) protein is Acidic phospholipase A2 2.